Consider the following 177-residue polypeptide: Large ribosomal subunit protein uL5m (177 aa).

Belongs to the universal ribosomal protein uL5 family.

Its subcellular location is the mitochondrion. This chain is Large ribosomal subunit protein uL5m (RPL5), found in Acanthamoeba castellanii (Amoeba).